The chain runs to 312 residues: Olfactory receptor 1D2 (312 aa).

The Extracellular portion of the chain corresponds to 1–25 (MDGGNQSEGSEFLLLGMSESPEQQQ). Asn5 is a glycosylation site (N-linked (GlcNAc...) asparagine). The chain crosses the membrane as a helical span at residues 26 to 49 (ILFWMFLSMYLVTVVGNVLIILAI). Topologically, residues 50 to 57 (NSDSHLHT) are cytoplasmic. The chain crosses the membrane as a helical span at residues 58–79 (PMYFFLANLSFTDLFFVTNTIP). The Extracellular segment spans residues 80–100 (KMLVNLQSQNKAISYAGCLTQ). Cys97 and Cys189 are joined by a disulfide. The chain crosses the membrane as a helical span at residues 101–120 (LYFLVSLVALDNLILAVMAY). Over 121–139 (DRYVAICCPLHYTTAMSPK) the chain is Cytoplasmic. Residues 140–158 (LCILLLSLCWVLSVLYGLI) form a helical membrane-spanning segment. Residues 159 to 196 (HTILMTRVTFCGSRKIHYIFCEMYVLLRMACSNIQINH) lie on the Extracellular side of the membrane. Asn195 carries an N-linked (GlcNAc...) asparagine glycan. Residues 197 to 219 (TVLIATGCFIFLIPFGFVIISYV) traverse the membrane as a helical segment. Topologically, residues 220 to 236 (LIIRAILRIPSVSKKYK) are cytoplasmic. The helical transmembrane segment at 237 to 259 (AFSTCASHLGAVSLFYGTLCMVY) threads the bilayer. Residues 260 to 271 (LKPLHTFSVKDS) are Extracellular-facing. The chain crosses the membrane as a helical span at residues 272–291 (VATVMYAVVTPMMNPFIYSL). The Cytoplasmic portion of the chain corresponds to 292 to 312 (RNKDMHGALGRLLDTHFKRLT).

It belongs to the G-protein coupled receptor 1 family.

The protein localises to the cell membrane. In terms of biological role, odorant receptor. The chain is Olfactory receptor 1D2 (OR1D2) from Gorilla gorilla gorilla (Western lowland gorilla).